We begin with the raw amino-acid sequence, 448 residues long: Ribosomal protein uS12 methylthiotransferase RimO (448 aa).

The MTTase N-terminal domain occupies 13-128 (KSFFITTLGC…AGEILRKNFP (116 aa)). Positions 22, 58, 91, 167, 171, and 174 each coordinate [4Fe-4S] cluster. One can recognise a Radical SAM core domain in the interval 153–382 (NYSKPYSYVK…AYLGTLKTIH (230 aa)). In terms of domain architecture, TRAM spans 383–448 (QNRIGKIYPC…ELDMSGTWVD (66 aa)).

The protein belongs to the methylthiotransferase family. RimO subfamily. [4Fe-4S] cluster serves as cofactor.

Its subcellular location is the cytoplasm. It catalyses the reaction L-aspartate(89)-[ribosomal protein uS12]-hydrogen + (sulfur carrier)-SH + AH2 + 2 S-adenosyl-L-methionine = 3-methylsulfanyl-L-aspartate(89)-[ribosomal protein uS12]-hydrogen + (sulfur carrier)-H + 5'-deoxyadenosine + L-methionine + A + S-adenosyl-L-homocysteine + 2 H(+). Functionally, catalyzes the methylthiolation of an aspartic acid residue of ribosomal protein uS12. This chain is Ribosomal protein uS12 methylthiotransferase RimO, found in Leptospira biflexa serovar Patoc (strain Patoc 1 / Ames).